Reading from the N-terminus, the 181-residue chain is c-Myc-binding protein homolog (181 aa).

Low complexity predominate over residues 111 to 127; it reads ESTEAAEQQQQQQQQEN. Disordered stretches follow at residues 111-145 and 159-181; these read ESTE…VAEI and VVTT…GSSE. A compositionally biased stretch (polar residues) spans 168–181; sequence PSPTVQAEASGSSE.

It belongs to the AMY1 family.

Its subcellular location is the nucleus. The chain is c-Myc-binding protein homolog from Drosophila melanogaster (Fruit fly).